A 374-amino-acid polypeptide reads, in one-letter code: GPN-loop GTPase 1 (374 aa).

An N-acetylalanine modification is found at A2. 29–34 contacts GTP; that stretch reads GSGKTT. Positions 86 to 88 match the Gly-Pro-Asn (GPN)-loop; involved in dimer interface motif; it reads GPN. 189 to 192 provides a ligand contact to GTP; it reads NKTD. S301, S312, and S314 each carry phosphoserine. The interval 326-354 is disordered; that stretch reads RGTLDEEDEEADSDTDDIDHRVTEESHEE. Residue T328 is modified to Phosphothreonine. Residues 330 to 342 show a composition bias toward acidic residues; sequence DEEDEEADSDTDD. Residue S338 is modified to Phosphoserine. T340 bears the Phosphothreonine mark. Residues 343–354 are compositionally biased toward basic and acidic residues; the sequence is IDHRVTEESHEE.

The protein belongs to the GPN-loop GTPase family. As to quaternary structure, heterodimer with GPN3. Binds to RNA polymerase II (RNAPII). Interacts directly with RNAPII subunits RPB4 and RPB7 and the CTD of RPB1. Interacts with XPA. As to expression, expressed ubiquitously.

Its subcellular location is the cytoplasm. The protein localises to the nucleus. Functionally, small GTPase required for proper nuclear import of RNA polymerase II (RNAPII). May act at an RNAP assembly step prior to nuclear import. Forms an interface between the RNA polymerase II enzyme and chaperone/scaffolding proteins, suggesting that it is required to connect RNA polymerase II to regulators of protein complex formation. May be involved in nuclear localization of XPA. This Homo sapiens (Human) protein is GPN-loop GTPase 1.